Here is a 360-residue protein sequence, read N- to C-terminus: G-protein coupled receptor 15 (360 aa).

Over 1–33 (MDPEETSVYLDYYYATSPNPDIRETHSHVPYTS) the chain is Extracellular. A helical membrane pass occupies residues 34–54 (VFLPVFYIAVFLTGVLGNLVL). Residues 55 to 69 (MGALHFKPGSRRLID) lie on the Cytoplasmic side of the membrane. The chain crosses the membrane as a helical span at residues 70-90 (IFIINLAASDFIFLVTLPLWV). The Extracellular segment spans residues 91–120 (DKEASLGLWRTGSFLCKGSSYMISVNMHCS). Residues 121 to 141 (VFLLTCMSVDRYLAIVCPVVS) traverse the membrane as a helical segment. Over 142-149 (RKFRRTDC) the chain is Cytoplasmic. Residues 150-170 (AYVVCASIWFISCLLGLPTLL) form a helical membrane-spanning segment. Topologically, residues 171 to 192 (SRELTLIDDKPYCAEKKATPLK) are extracellular. Residues 193–213 (LIWSLVALIFTFFVPLLSIVT) traverse the membrane as a helical segment. At 214-239 (CYCRIARKLCAHYQQSGKHNKKLKKS) the chain is on the cytoplasmic side. The chain crosses the membrane as a helical span at residues 240–260 (IKIIFIVVAAFLVSWLPFNTS). Residues 261–284 (KLLAIVSGLQQERYFPSAILQLGM) are Extracellular-facing. Residues 285 to 305 (EVSGPLAFANSCVNPFIYYIF) traverse the membrane as a helical segment. The Cytoplasmic segment spans residues 306-360 (DSYIRRAIVHCLCPCLKNYDFGSSTETSDSHLTKALSTFIHAEDFTRRRKRSVSL). Ser359 carries the post-translational modification Phosphoserine.

This sequence belongs to the G-protein coupled receptor 1 family. As to quaternary structure, interacts with adapter YWHAE; this interaction promotes ER-to-Golgi transport of GPR15. Post-translationally, phosphorylation is necessary for YWHAE binding and efficient surface expression. O-glycosylated. Sialylated O-glycans in the N-terminal tail inhibits binding of GPR15LG. In terms of processing, sulfation is required for efficient binding of GPR15LG.

The protein localises to the cell membrane. G protein-coupled receptor that plays an important role in immune homeostasis. Acts via its natural ligand GPR15LG, a chemokine-like polypeptide strongly expressed in gastrointestinal tissues. GPR15-GPR15LG signaling axis regulates intestinal homeostasis and inflammation through the migration of immune cells. Controls thereby the specific homing of T-cells, particularly FOXP3+ regulatory T-cells (Tregs), to the large intestine lamina propria. Also required for skin localization of thymus-derived dendritic epidermal T-cells. Plays an important role in mediating cytoprotective function as well as angiogenesis of thrombomodulin. Mechanistically, preferentially signals through the Gi/o pathway to inhibit adenylate cyclase activity and activate a phosphatidylinositol-calcium second messenger system that regulates the release of Ca(2+) ions from intracellular stores. This Chlorocebus aethiops (Green monkey) protein is G-protein coupled receptor 15 (GPR15).